A 392-amino-acid polypeptide reads, in one-letter code: Formate-dependent phosphoribosylglycinamide formyltransferase (392 aa).

Residues 22 to 23 and E82 contribute to the N(1)-(5-phospho-beta-D-ribosyl)glycinamide site; that span reads EL. Residues R114, K155, 160 to 165, 195 to 198, and E203 each bind ATP; these read SSGKGQ and EGLV. Positions 119-308 constitute an ATP-grasp domain; that stretch reads RLAAETLGVP…EFALHVRAFL (190 aa). 2 residues coordinate Mg(2+): E267 and E279. N(1)-(5-phospho-beta-D-ribosyl)glycinamide is bound by residues D286, K355, and 362-363; that span reads RR.

This sequence belongs to the PurK/PurT family. As to quaternary structure, homodimer.

The enzyme catalyses N(1)-(5-phospho-beta-D-ribosyl)glycinamide + formate + ATP = N(2)-formyl-N(1)-(5-phospho-beta-D-ribosyl)glycinamide + ADP + phosphate + H(+). Its pathway is purine metabolism; IMP biosynthesis via de novo pathway; N(2)-formyl-N(1)-(5-phospho-D-ribosyl)glycinamide from N(1)-(5-phospho-D-ribosyl)glycinamide (formate route): step 1/1. In terms of biological role, involved in the de novo purine biosynthesis. Catalyzes the transfer of formate to 5-phospho-ribosyl-glycinamide (GAR), producing 5-phospho-ribosyl-N-formylglycinamide (FGAR). Formate is provided by PurU via hydrolysis of 10-formyl-tetrahydrofolate. The protein is Formate-dependent phosphoribosylglycinamide formyltransferase of Pectobacterium carotovorum subsp. carotovorum (strain PC1).